We begin with the raw amino-acid sequence, 363 residues long: Ataxin-3 (363 aa).

The region spanning 1 to 180 (MESIFHERQE…DCEADQLLQM (180 aa)) is the Josephin domain. Cysteine 14 functions as the Nucleophile in the catalytic mechanism. Histidine 119 (proton acceptor) is an active-site residue. Asparagine 134 is an active-site residue. Residues 192–209 (IGEETAQSRDQRLPRSDV) show a composition bias toward basic and acidic residues. The segment at 192–212 (IGEETAQSRDQRLPRSDVDQA) is disordered. 3 consecutive UIM domains span residues 227 to 246 (EDEE…IDME), 247 to 266 (DEEA…SRQS), and 337 to 356 (SEED…ARNH). Over residues 260 to 290 (MQGSRQSEFSNSLPQNASQPPHTSQTDSLSS) the composition is skewed to polar residues. Positions 260-363 (MQGSRQSEFS…RNHLSTEEKK (104 aa)) are disordered. Over residues 353–363 (ARNHLSTEEKK) the composition is skewed to basic and acidic residues.

In terms of tissue distribution, widely expressed.

It localises to the nucleus matrix. It is found in the nucleus. The protein resides in the lysosome membrane. It catalyses the reaction Thiol-dependent hydrolysis of ester, thioester, amide, peptide and isopeptide bonds formed by the C-terminal Gly of ubiquitin (a 76-residue protein attached to proteins as an intracellular targeting signal).. Functionally, deubiquitinating enzyme involved in protein homeostasis maintenance, transcription, cytoskeleton regulation, myogenesis and degradation of misfolded chaperone substrates. Binds long polyubiquitin chains and trims them, while it has weak or no activity against chains of 4 or less ubiquitins. Involved in degradation of misfolded chaperone substrates via its interaction with STUB1/CHIP: recruited to monoubiquitinated STUB1/CHIP, and restricts the length of ubiquitin chain attached to STUB1/CHIP substrates and preventing further chain extension. Interacts with key regulators of transcription and represses transcription: acts as a histone-binding protein that regulates transcription. Acts as a negative regulator of mTORC1 signaling in response to amino acid deprivation by mediating deubiquitination of RHEB, thereby promoting RHEB inactivation by the TSC-TBC complex. Regulates autophagy via the deubiquitination of 'Lys-402' of BECN1 leading to the stabilization of BECN1. This Gallus gallus (Chicken) protein is Ataxin-3 (ATXN3).